The chain runs to 535 residues: Glucan 1,6-alpha-glucosidase (535 aa).

The active-site Nucleophile is the Asp-194. Residue Glu-236 is the Proton donor of the active site.

Belongs to the glycosyl hydrolase 13 family.

It localises to the cytoplasm. The enzyme catalyses Hydrolysis of (1-&gt;6)-alpha-D-glucosidic linkages in (1-&gt;6)-alpha-D-glucans and derived oligosaccharides.. In terms of biological role, the physiological substrates may be short isomaltosaccharides. This is Glucan 1,6-alpha-glucosidase (dexB) from Streptococcus pneumoniae serotype 4 (strain ATCC BAA-334 / TIGR4).